We begin with the raw amino-acid sequence, 547 residues long: Nitrosoguanidine resistance protein SNG1 (547 aa).

Residues 35–86 (NQRFAEGSGHSSDLAKSLEDYRPPDEKPSSLSSVGEGGANEEEKGGNDGGPL) are disordered. Residues 50 to 62 (KSLEDYRPPDEKP) are compositionally biased toward basic and acidic residues. A Phosphothreonine modification is found at threonine 91. 8 helical membrane-spanning segments follow: residues 109–129 (FVLN…IYWG), 159–179 (ISAI…IYNA), 318–338 (ILMA…VLQL), 363–383 (LISW…SAIF), 394–414 (GGFV…GGAN), 418–438 (LSLV…TWII), 457–477 (YGYI…FLNL), and 488–508 (ILVA…KFAG). The segment covering 526–536 (ATQRASRPAEA) has biased composition (low complexity). The tract at residues 526-547 (ATQRASRPAEANTDKNNNPPGN) is disordered.

This sequence to yeast YJR015W.

It is found in the membrane. Its function is as follows. May function as a N-methyl-N'nitro-N-nitrosoguanidine (MNNG) export permease. This Saccharomyces cerevisiae (strain ATCC 204508 / S288c) (Baker's yeast) protein is Nitrosoguanidine resistance protein SNG1 (SNG1).